A 442-amino-acid polypeptide reads, in one-letter code: MKAVLPDSKIPKRWYNILPDLPEPLAPPLDPETDEPMEPEKLLRIFAEELVKQEMSTDRYIEIPKEVREIYSKIGRPTPLFRATNLERALGTPARIYFKYEGATVTGSHKINTALAQAYYAKRQGIERLVTETGAGQWGTALSLAGALLGLNVRVYMARASYQQKPYRKTIMRLYGAEIYPSPSDRTEIGRKFLAEDPNHPGGLGIAISEAIEDVLRDEKARYALGSVLNHVLMHQTVIGLEAQEQMKEFEEPDVIIGCVGGGSNFAGLAYPFVRDVLKGEAEYEFIAVEPKAAPSMTRGVYKYDYGDSGGYTPKMKMHTLGHTYYVPPIHAGGLRYHGLAPTLSVLINHGIVKPVAYHQNEVFQAAHLFAKTEGIVPAPESAHAIKGAIDRALEAKREGREEVILFNLSGHGFLDLKGYEDYLDGKLEDYEPEHFPALDNY.

Residue lysine 110 is modified to N6-(pyridoxal phosphate)lysine.

It belongs to the TrpB family. Tetramer of two alpha and two beta chains. Pyridoxal 5'-phosphate serves as cofactor.

The enzyme catalyses (1S,2R)-1-C-(indol-3-yl)glycerol 3-phosphate + L-serine = D-glyceraldehyde 3-phosphate + L-tryptophan + H2O. The protein operates within amino-acid biosynthesis; L-tryptophan biosynthesis; L-tryptophan from chorismate: step 5/5. Its function is as follows. The beta subunit is responsible for the synthesis of L-tryptophan from indole and L-serine. This chain is Tryptophan synthase beta chain 2, found in Thermococcus kodakarensis (strain ATCC BAA-918 / JCM 12380 / KOD1) (Pyrococcus kodakaraensis (strain KOD1)).